A 201-amino-acid polypeptide reads, in one-letter code: Casparian strip membrane protein 4 (201 aa).

A disordered region spans residues 1–23 (MEGKAAVTTSTEHGDGEASRTAA). Residues 1-41 (MEGKAAVTTSTEHGDGEASRTAARTVVSGSSRGGAASRALS) are Cytoplasmic-facing. A helical membrane pass occupies residues 42-62 (VADLILRVVAVVAIVDSAIAM). Residues 63–87 (GTTNQTLPFFTQFLRFKAQYSDLPT) lie on the Extracellular side of the membrane. Residue N66 is glycosylated (N-linked (GlcNAc...) asparagine). Residues 88 to 108 (LTLFVVANSAVTAYLVLSIPL) form a helical membrane-spanning segment. Residues 109–122 (SVVHIIRSRASYSR) lie on the Cytoplasmic side of the membrane. Residues 123–143 (LVLIFLDSVMLALVAAVASAS) form a helical membrane-spanning segment. The Extracellular segment spans residues 144–172 (AAIVYLAHKGNVRANWFAVCQQFDSFCER). The helical transmembrane segment at 173 to 193 (ISGPLIGSFAAMAVLLLLVLL) threads the bilayer. Topologically, residues 194-201 (SAAALARR) are cytoplasmic.

Belongs to the Casparian strip membrane proteins (CASP) family. In terms of assembly, homodimer and heterodimers.

It is found in the cell membrane. Its function is as follows. Regulates membrane-cell wall junctions and localized cell wall deposition. Required for establishment of the Casparian strip membrane domain (CSD) and the subsequent formation of Casparian strips, a cell wall modification of the root endodermis that determines an apoplastic barrier between the intraorganismal apoplasm and the extraorganismal apoplasm and prevents lateral diffusion. The sequence is that of Casparian strip membrane protein 4 from Oryza sativa subsp. japonica (Rice).